Here is a 151-residue protein sequence, read N- to C-terminus: Austinoid biosynthesis clusters protein F (151 aa).

It belongs to the trt14 isomerase family. In terms of assembly, homodimer.

It functions in the pathway secondary metabolite biosynthesis; terpenoid biosynthesis. Functionally, part of the gene cluster B that mediates the biosynthesis of the fungal meroterpenoid acetoxydehydroaustin. The first step of the pathway is the synthesis of 3,5-dimethylorsellinic acid by the polyketide synthase ausA. 3,5-dimethylorsellinic acid is then prenylated by the polyprenyl transferase ausN. Further epoxidation by the FAD-dependent monooxygenase ausM and cyclization by the probable terpene cyclase ausL lead to the formation of protoaustinoid A. Protoaustinoid A is then oxidized to spiro-lactone preaustinoid A3 by the combined action of the FAD-binding monooxygenases ausB and ausC, and the dioxygenase ausE. Acid-catalyzed keto-rearrangement and ring contraction of the tetraketide portion of preaustinoid A3 by ausJ lead to the formation of preaustinoid A4. The aldo-keto reductase ausK, with the help of ausH, is involved in the next step by transforming preaustinoid A4 into isoaustinone which is in turn hydroxylated by the P450 monooxygenase ausI to form austinolide. The cytochrome P450 monooxygenase ausG then modifies austinolide to austinol. Austinol is further acetylated to austin by the O-acetyltransferase ausP, which spontaneously changes to dehydroaustin. The cytochrome P450 monooxygenase then converts dehydroaustin is into 7-dehydrodehydroaustin. The hydroxylation catalyzed by ausR permits the second O-acetyltransferase ausQ to add an additional acetyl group to the molecule, leading to the formation of acetoxydehydroaustin. Due to genetic rearrangements of the clusters and the subsequent loss of some enzymes, the end product of the Penicillium brasilianum austinoid biosynthesis clusters is acetoxydehydroaustin. The polypeptide is Austinoid biosynthesis clusters protein F (Penicillium brasilianum).